Consider the following 1047-residue polypeptide: Cation efflux system protein CusA (1047 aa).

Helical transmembrane passes span Phe-14–Thr-34, Leu-338–Trp-358, Ala-363–Phe-383, Met-391–Ile-411, Val-446–Thr-466, Ala-485–Ile-505, Val-532–Trp-552, Lys-871–Phe-891, Leu-898–Met-918, Thr-928–Leu-948, Ala-985–Gly-1005, and Ile-1012–Pro-1032.

It belongs to the resistance-nodulation-cell division (RND) (TC 2.A.6) family. As to quaternary structure, the cus efflux system is composed of CusA, CusB, CusC and CusF.

It localises to the cell inner membrane. Part of a cation efflux system that mediates resistance to copper and silver. The polypeptide is Cation efflux system protein CusA (cusA) (Escherichia coli (strain K12)).